The primary structure comprises 92 residues: Antifungal protein B (92 aa).

Positions 1–18 (MQITSIAIVFFAAMGAVA) are cleaved as a signal peptide. A propeptide spanning residues 19-34 (NPIARESDDLDARDVQ) is cleaved from the precursor. Disulfide bonds link Cys42-Cys70, Cys49-Cys77, and Cys62-Cys88.

The protein resides in the secreted. It is found in the host cytoplasm. In terms of biological role, antifungal protein that acts as an inhibitor of growth of human pathogenic molds and yeasts. Is active against the model organism Neurospora crassa, the opportunistic human pathogens Aspergillus fumigatus, Trichophyton rubrum, and Aspergillus terreus. Provokes a reduction of the incidence of infections caused by Penicillium digitatum and Penicillium italicum in oranges and by Penicillium expansum in apples. Low doses of pafB have self-inhibition activity. Also shows activity against the model yeast Saccaromyces cerevisiae and the opportunistic human pathogen Candida albicans. No antibacterial activity is observed on the Gram-negative Escherichia coli and the Gram-positive Bacillus subtilis. Finally, also shows anti-viral activity in a model of HCoV 229E infected L132 cells. The protein is Antifungal protein B of Penicillium chrysogenum (Penicillium notatum).